The chain runs to 295 residues: Golgi-associated RAB2 interactor protein 1A (295 aa).

A disordered region spans residues 187–206 (MPNSSTETTPESSRPASSQS). The span at 190-206 (SSTETTPESSRPASSQS) shows a compositional bias: low complexity. A phosphoserine mark is found at S220, S221, S251, and S255.

Belongs to the GARIN family. Interacts (via N-terminus) with RAB2B (in GTP-bound form).

It localises to the golgi apparatus. In terms of biological role, RAB2B effector protein required for accurate acrosome formation and normal male fertility. This Rattus norvegicus (Rat) protein is Golgi-associated RAB2 interactor protein 1A (Garin1a).